A 576-amino-acid chain; its full sequence is V-type ATP synthase alpha chain (576 aa).

238-245 provides a ligand contact to ATP; that stretch reads GPFGAGKT.

The protein belongs to the ATPase alpha/beta chains family.

The enzyme catalyses ATP + H2O + 4 H(+)(in) = ADP + phosphate + 5 H(+)(out). In terms of biological role, produces ATP from ADP in the presence of a proton gradient across the membrane. The V-type alpha chain is a catalytic subunit. This is V-type ATP synthase alpha chain from Borrelia duttonii (strain Ly).